The primary structure comprises 77 residues: Membrane-associated ATPase epsilon chain (77 aa).

The protein to E.hirae NtpH. Sul-ATPase is composed of six (or maybe five) subunits: alpha, beta, delta, gamma, C (proteolipid), and possibly epsilon.

The catalysed reaction is ATP + H2O + 4 H(+)(in) = ADP + phosphate + 5 H(+)(out). The chain is Membrane-associated ATPase epsilon chain (atpE) from Sulfolobus acidocaldarius (strain ATCC 33909 / DSM 639 / JCM 8929 / NBRC 15157 / NCIMB 11770).